Here is a 309-residue protein sequence, read N- to C-terminus: Manganese ABC transporter substrate-binding lipoprotein PsaA (309 aa).

The signal sequence occupies residues 1 to 19; that stretch reads MKKLGTLFVLFLSVIVLVA. Residue C20 is the site of N-palmitoyl cysteine attachment. C20 is lipidated: S-diacylglycerol cysteine. Mn(2+) is bound by residues H67, H139, E205, and D280.

The protein belongs to the bacterial solute-binding protein 9 family. Lipoprotein receptor antigen (Lrai) subfamily.

The protein resides in the cell membrane. Functionally, part of the ATP-riven (ABC) transport system PsaABC involved in manganese import. Binds manganese with high affinity and specificity and delivers it to the membrane permease for translocation into the cytoplasm. Also acts as an adhesin which is involved on adherence to extracellular matrix. This chain is Manganese ABC transporter substrate-binding lipoprotein PsaA (psaA), found in Streptococcus mitis.